The following is a 201-amino-acid chain: Small ribosomal subunit protein uS2 (201 aa).

The protein belongs to the universal ribosomal protein uS2 family.

The sequence is that of Small ribosomal subunit protein uS2 from Nanoarchaeum equitans (strain Kin4-M).